The primary structure comprises 461 residues: MGTIHLFRKPQRSFFGKLLQEFRLVAADRRSWKILLFGAINLTCTGFLLMWCSSTNSIALTAYTYLTIFDLFSLITCLVSYWVMMRKPSPAYSFGFERLEVLAVFASTVLAQLGALFILKESAERFLEQPEIHTGRLLVGTFVALSFNLFTMLSIRNKPFAYVSEAASTSWLQEHVADLSRSLCGIIPGLSSIFLPRMNPFVLIDLAGAFALCITYMLIEINNYFAVDTASAIAIALMTFGTMYPMSVYSGKVLLQTTPPHVIGQLDKLIREVSTLDGVLEVRNEHFWTLGFGSLAGSVHVRIRRDANEQMVLAHVTNRLYTLVSTLTVQIFKDDWIRPALLSGPVAANVLNFTDHHVIPMPPLKGTDDSNPVTSTPTKPSSPPPEFSFNTPGKNVSPVILLNTQTRPYGLGLNHGHAPYSSVLNQGLGVPGIGATQGFRTGFTNIPSRYGTNNRIGQPRP.

Residues 1-33 (MGTIHLFRKPQRSFFGKLLQEFRLVAADRRSWK) are Cytoplasmic-facing. A helical membrane pass occupies residues 34–54 (ILLFGAINLTCTGFLLMWCSS). Residues 55 to 64 (TNSIALTAYT) lie on the Extracellular side of the membrane. Residues 65–85 (YLTIFDLFSLITCLVSYWVMM) traverse the membrane as a helical segment. Topologically, residues 86 to 98 (RKPSPAYSFGFER) are cytoplasmic. A helical membrane pass occupies residues 99–119 (LEVLAVFASTVLAQLGALFIL). Topologically, residues 120–134 (KESAERFLEQPEIHT) are extracellular. A helical membrane pass occupies residues 135–155 (GRLLVGTFVALSFNLFTMLSI). Over 156–200 (RNKPFAYVSEAASTSWLQEHVADLSRSLCGIIPGLSSIFLPRMNP) the chain is Cytoplasmic. A helical transmembrane segment spans residues 201–221 (FVLIDLAGAFALCITYMLIEI). Residues 222–223 (NN) are Extracellular-facing. Residues 224-244 (YFAVDTASAIAIALMTFGTMY) form a helical membrane-spanning segment. Residues 245 to 461 (PMSVYSGKVL…TNNRIGQPRP (217 aa)) lie on the Cytoplasmic side of the membrane. The interval 362–393 (PPLKGTDDSNPVTSTPTKPSSPPPEFSFNTPG) is disordered. Positions 370-379 (SNPVTSTPTK) are enriched in low complexity.

It belongs to the cation diffusion facilitator (CDF) transporter (TC 2.A.4) family. SLC30A subfamily. In terms of assembly, heterodimer with SLC30A5; form a functional zinc ion transmembrane transporter.

It localises to the golgi apparatus. Its subcellular location is the trans-Golgi network membrane. In terms of biological role, has probably no intrinsic transporter activity but together with SLC30A5 forms a functional zinc ion:proton antiporter heterodimer, mediating zinc entry into the lumen of organelles along the secretory pathway. As part of that zinc ion:proton antiporter, contributes to zinc ion homeostasis within the early secretory pathway and regulates the activation and folding of enzymes like alkaline phosphatases and enzymes involved in phosphatidylinositol glycan anchor biosynthesis. This Bos taurus (Bovine) protein is Zinc transporter 6 (SLC30A6).